The sequence spans 108 residues: Large ribosomal subunit protein bL21 (108 aa).

It belongs to the bacterial ribosomal protein bL21 family. As to quaternary structure, part of the 50S ribosomal subunit. Contacts protein L20.

Functionally, this protein binds to 23S rRNA in the presence of protein L20. The protein is Large ribosomal subunit protein bL21 of Buchnera aphidicola subsp. Acyrthosiphon pisum (strain 5A).